The sequence spans 435 residues: Serine--tRNA ligase (435 aa).

L-serine is bound at residue 234-236 (TAE). 265-267 (RRE) is an ATP binding site. E288 provides a ligand contact to L-serine. Position 352 to 355 (352 to 355 (EISS)) interacts with ATP. S388 provides a ligand contact to L-serine.

It belongs to the class-II aminoacyl-tRNA synthetase family. Type-1 seryl-tRNA synthetase subfamily. As to quaternary structure, homodimer. The tRNA molecule binds across the dimer.

It is found in the cytoplasm. The catalysed reaction is tRNA(Ser) + L-serine + ATP = L-seryl-tRNA(Ser) + AMP + diphosphate + H(+). The enzyme catalyses tRNA(Sec) + L-serine + ATP = L-seryl-tRNA(Sec) + AMP + diphosphate + H(+). It participates in aminoacyl-tRNA biosynthesis; selenocysteinyl-tRNA(Sec) biosynthesis; L-seryl-tRNA(Sec) from L-serine and tRNA(Sec): step 1/1. In terms of biological role, catalyzes the attachment of serine to tRNA(Ser). Is also able to aminoacylate tRNA(Sec) with serine, to form the misacylated tRNA L-seryl-tRNA(Sec), which will be further converted into selenocysteinyl-tRNA(Sec). This chain is Serine--tRNA ligase, found in Synechococcus sp. (strain JA-3-3Ab) (Cyanobacteria bacterium Yellowstone A-Prime).